Reading from the N-terminus, the 137-residue chain is Nucleoside diphosphate kinase (137 aa).

ATP is bound by residues Lys9, Phe57, Arg85, Thr91, Arg102, and Asn112. Residue His115 is the Pros-phosphohistidine intermediate of the active site.

It belongs to the NDK family. In terms of assembly, homotetramer. Requires Mg(2+) as cofactor.

It is found in the cytoplasm. The enzyme catalyses a 2'-deoxyribonucleoside 5'-diphosphate + ATP = a 2'-deoxyribonucleoside 5'-triphosphate + ADP. It carries out the reaction a ribonucleoside 5'-diphosphate + ATP = a ribonucleoside 5'-triphosphate + ADP. Functionally, major role in the synthesis of nucleoside triphosphates other than ATP. The ATP gamma phosphate is transferred to the NDP beta phosphate via a ping-pong mechanism, using a phosphorylated active-site intermediate. The sequence is that of Nucleoside diphosphate kinase from Leptospira borgpetersenii serovar Hardjo-bovis (strain L550).